A 151-amino-acid chain; its full sequence is Small ribosomal subunit protein uS11 (151 aa).

Belongs to the universal ribosomal protein uS11 family.

In Podocoryna carnea (Hydrozoan), this protein is Small ribosomal subunit protein uS11 (RPS14).